The chain runs to 439 residues: Microfibrillar-associated protein 1 (439 aa).

2 disordered regions span residues 1–27 (MSVPSALMKQPPIQSTAGAVPVRNEKG) and 39–200 (YVSG…PRLK). Position 2 is an N-acetylserine (serine 2). Phosphoserine occurs at positions 52 and 53. The span at 61–70 (QFIKKAKEQE) shows a compositional bias: basic and acidic residues. Residue lysine 67 forms a Glycyl lysine isopeptide (Lys-Gly) (interchain with G-Cter in SUMO2) linkage. The span at 71 to 81 (AEPEEQEEDSS) shows a compositional bias: acidic residues. A phosphoserine mark is found at serine 94, serine 116, serine 118, serine 132, and serine 133. Acidic residues-rich tracts occupy residues 112–122 (VVGESDSEVEG) and 131–144 (DSSEEEEEEIDDEE). Residues 145-163 (IERRRGMMRQRAQERKNEE) are compositionally biased toward basic and acidic residues. Over residues 178-195 (ESESESEYEEYTDSEDEM) the composition is skewed to acidic residues. Lysine 249 participates in a covalent cross-link: Glycyl lysine isopeptide (Lys-Gly) (interchain with G-Cter in SUMO2). Position 267 is a phosphothreonine (threonine 267). Lysine 357 is covalently cross-linked (Glycyl lysine isopeptide (Lys-Gly) (interchain with G-Cter in SUMO2)). Phosphoserine is present on serine 361. Glycyl lysine isopeptide (Lys-Gly) (interchain with G-Cter in SUMO2) cross-links involve residues lysine 371, lysine 381, lysine 415, and lysine 418. Position 432 is a phosphoserine (serine 432).

Belongs to the MFAP1 family. Component of the spliceosome B complex. Interacts with PRPF38A (via N-terminal interaction domain).

The protein localises to the nucleus. Functionally, involved in pre-mRNA splicing as a component of the spliceosome. In Homo sapiens (Human), this protein is Microfibrillar-associated protein 1.